Here is a 263-residue protein sequence, read N- to C-terminus: Probable endonuclease lcl3 (263 aa).

Residues 1–21 (MGWLDFSSKSKKEEKDDTRPS) form a disordered region. A compositionally biased stretch (basic and acidic residues) spans 8–19 (SKSKKEEKDDTR). The chain crosses the membrane as a helical span at residues 41 to 59 (TVIPTILLTTTILVSTRLY). A TNase-like domain is found at 80–240 (RSLFGTVTRV…KKKKLGMWSG (161 aa)). The active site involves Arg131. Asp136 lines the Ca(2+) pocket. Active-site residues include Glu139 and Arg179. The interval 236–263 (GMWSGKKKDYESPRDYKTRTANAAKMLK) is disordered. Residues 241–253 (KKKDYESPRDYKT) are compositionally biased toward basic and acidic residues.

This sequence belongs to the LCL3 family.

It localises to the mitochondrion. Its subcellular location is the membrane. This chain is Probable endonuclease lcl3 (lcl3), found in Botryotinia fuckeliana (strain B05.10) (Noble rot fungus).